The sequence spans 79 residues: Acyl carrier protein (79 aa).

The 76-residue stretch at 1 to 76 folds into the Carrier domain; it reads MSLEDDVIAI…DVFTYIKKRQ (76 aa). Ser-36 is subject to O-(pantetheine 4'-phosphoryl)serine.

The protein belongs to the acyl carrier protein (ACP) family. In terms of processing, 4'-phosphopantetheine is transferred from CoA to a specific serine of apo-ACP by AcpS. This modification is essential for activity because fatty acids are bound in thioester linkage to the sulfhydryl of the prosthetic group.

It is found in the cytoplasm. It participates in lipid metabolism; fatty acid biosynthesis. Carrier of the growing fatty acid chain in fatty acid biosynthesis. The protein is Acyl carrier protein of Chlamydia pneumoniae (Chlamydophila pneumoniae).